The chain runs to 462 residues: Chromosomal replication initiator protein DnaA (462 aa).

Positions 1–84 (MAVSLWQQCI…RFDIGSRPSA (84 aa)) are domain I, interacts with DnaA modulators. Positions 84 to 125 (APRPVQATAAVERPKFEQNTKPAKTSFNVNSPEPAMAANHRS) are domain II. Residues 126 to 342 (NINRTYQFEN…GALNRVIANA (217 aa)) form a domain III, AAA+ region region. Residues G170, G172, K173, and T174 each contribute to the ATP site. The domain IV, binds dsDNA stretch occupies residues 343–462 (NFTGRPITID…YANLIRTLSS (120 aa)).

This sequence belongs to the DnaA family. In terms of assembly, oligomerizes as a right-handed, spiral filament on DNA at oriC.

It localises to the cytoplasm. Its function is as follows. Plays an essential role in the initiation and regulation of chromosomal replication. ATP-DnaA binds to the origin of replication (oriC) to initiate formation of the DNA replication initiation complex once per cell cycle. Binds the DnaA box (a 9 base pair repeat at the origin) and separates the double-stranded (ds)DNA. Forms a right-handed helical filament on oriC DNA; dsDNA binds to the exterior of the filament while single-stranded (ss)DNA is stabiized in the filament's interior. The ATP-DnaA-oriC complex binds and stabilizes one strand of the AT-rich DNA unwinding element (DUE), permitting loading of DNA polymerase. After initiation quickly degrades to an ADP-DnaA complex that is not apt for DNA replication. Binds acidic phospholipids. The polypeptide is Chromosomal replication initiator protein DnaA (Shewanella sediminis (strain HAW-EB3)).